Here is a 134-residue protein sequence, read N- to C-terminus: Phosphoribosyl-ATP pyrophosphatase 2 (134 aa).

The protein belongs to the PRA-PH family.

Its subcellular location is the cytoplasm. It catalyses the reaction 1-(5-phospho-beta-D-ribosyl)-ATP + H2O = 1-(5-phospho-beta-D-ribosyl)-5'-AMP + diphosphate + H(+). It participates in amino-acid biosynthesis; L-histidine biosynthesis; L-histidine from 5-phospho-alpha-D-ribose 1-diphosphate: step 2/9. The protein is Phosphoribosyl-ATP pyrophosphatase 2 (hisE2) of Bradyrhizobium diazoefficiens (strain JCM 10833 / BCRC 13528 / IAM 13628 / NBRC 14792 / USDA 110).